The following is a 183-amino-acid chain: ATP synthase subunit b, chloroplastic (183 aa).

Residues 27–49 traverse the membrane as a helical segment; that stretch reads LATNLINLTVVVGVLIFFGKGVL.

It belongs to the ATPase B chain family. In terms of assembly, F-type ATPases have 2 components, F(1) - the catalytic core - and F(0) - the membrane proton channel. F(1) has five subunits: alpha(3), beta(3), gamma(1), delta(1), epsilon(1). F(0) has four main subunits: a(1), b(1), b'(1) and c(10-14). The alpha and beta chains form an alternating ring which encloses part of the gamma chain. F(1) is attached to F(0) by a central stalk formed by the gamma and epsilon chains, while a peripheral stalk is formed by the delta, b and b' chains.

Its subcellular location is the plastid. It localises to the chloroplast thylakoid membrane. In terms of biological role, f(1)F(0) ATP synthase produces ATP from ADP in the presence of a proton or sodium gradient. F-type ATPases consist of two structural domains, F(1) containing the extramembraneous catalytic core and F(0) containing the membrane proton channel, linked together by a central stalk and a peripheral stalk. During catalysis, ATP synthesis in the catalytic domain of F(1) is coupled via a rotary mechanism of the central stalk subunits to proton translocation. Component of the F(0) channel, it forms part of the peripheral stalk, linking F(1) to F(0). This chain is ATP synthase subunit b, chloroplastic, found in Hordeum vulgare (Barley).